A 691-amino-acid polypeptide reads, in one-letter code: Mediator of RNA polymerase II transcription subunit 17 (691 aa).

Positions 158–185 (KLESFDAAANKLLQSAQRLEEDIAAETK) form a coiled coil.

The protein belongs to the Mediator complex subunit 17 family. As to quaternary structure, component of the Mediator complex.

It is found in the nucleus. Its function is as follows. Component of the Mediator complex, a coactivator involved in the regulated transcription of nearly all RNA polymerase II-dependent genes. Mediator functions as a bridge to convey information from gene-specific regulatory proteins to the basal RNA polymerase II transcription machinery. Mediator is recruited to promoters by direct interactions with regulatory proteins and serves as a scaffold for the assembly of a functional preinitiation complex with RNA polymerase II and the general transcription factors. This is Mediator of RNA polymerase II transcription subunit 17 (SRB4) from Coccidioides immitis (strain RS) (Valley fever fungus).